Consider the following 187-residue polypeptide: Dihydrofolate reductase (187 aa).

In terms of domain architecture, DHFR spans 4–185 (PLNCIVAVSQ…IKYKFEVYEK (182 aa)). NADP(+) contacts are provided by residues Ala-10 and 16-22 (GIGKNGD). Substrate is bound at residue 31–36 (EFQYFQ). 55–57 (RKT) serves as a coordination point for NADP(+). Residue Arg-71 coordinates substrate. NADP(+)-binding positions include 77 to 79 (SRE) and 117 to 124 (GGSSVYKE).

Belongs to the dihydrofolate reductase family. As to quaternary structure, homodimer.

Its subcellular location is the mitochondrion. It localises to the cytoplasm. The enzyme catalyses (6S)-5,6,7,8-tetrahydrofolate + NADP(+) = 7,8-dihydrofolate + NADPH + H(+). It functions in the pathway cofactor biosynthesis; tetrahydrofolate biosynthesis; 5,6,7,8-tetrahydrofolate from 7,8-dihydrofolate: step 1/1. Its function is as follows. Key enzyme in folate metabolism. Contributes to the de novo mitochondrial thymidylate biosynthesis pathway. Catalyzes an essential reaction for de novo glycine and purine synthesis, and for DNA precursor synthesis. Binds its own mRNA and that of DHFR2. The sequence is that of Dihydrofolate reductase (DHFR) from Bos taurus (Bovine).